Here is a 532-residue protein sequence, read N- to C-terminus: MDDSIGVKRHWIWQGAFVLILAGVITKILSAVYRVPFQNIVGDVGFYIYQQVYPFLGIAVMLSTSGFPVIISKLMNDYSEKNHHTILKISALFLSLIGILLFLCLYLGAVPIALFMGDSHLAVLIQVAAYAFLLFPFVALLRGGFQGRHEMLPSALSQMTEQFLRVAVLLGLSFWLVKKGASLYTAGAAAASGSLAGSLVALIILGFFWFKTKRDNQTDRQNENVITTKELTKKLLLYSVTICVSSLLLLFIQLVDALNLYALLSGGEASEEAKCLKGIYDRGQPLLQLGSVFAVSIATSLVPYISMAVKNKELKIMKEKITSSLKLCLVLGTGASAGLICILKPVNIMLFQNGEGTGALQVFSCSILFASLAVTAAAVLQGAGYTVFPAIAVGAGVAVKWVLNTLLVPRYGIEGASLATAASFAAVAGLNLYQLRQKEWLDKLRGVLIPIIGSALLMSAVLLAYTRLWTFLFPATGRGAAVIESLSAVAIGGAVFIYCMMRLGIFTDEELNSVPFGSKLSKFMRRREQNGG.

14 helical membrane-spanning segments follow: residues 25–45 (ITKILSAVYRVPFQNIVGDVG), 65–85 (SGFPVIISKLMNDYSEKNHHT), 109–129 (AVPIALFMGDSHLAVLIQVAA), 134–154 (LFPFVALLRGGFQGRHEMLPS), 179–199 (KGASLYTAGAAAASGSLAGSL), 203–223 (IILGFFWFKTKRDNQTDRQNE), 248–268 (LLLFIQLVDALNLYALLSGGE), 302–322 (VPYISMAVKNKELKIMKEKIT), 344–364 (KPVNIMLFQNGEGTGALQVFS), 371–391 (SLAVTAAAVLQGAGYTVFPAI), 392–412 (AVGAGVAVKWVLNTLLVPRYG), 425–445 (AAVAGLNLYQLRQKEWLDKLR), 459–479 (SAVLLAYTRLWTFLFPATGRG), and 494–514 (AVFIYCMMRLGIFTDEELNSV).

This sequence belongs to the polysaccharide synthase family.

It is found in the cell membrane. This is an uncharacterized protein from Bacillus subtilis (strain 168).